The sequence spans 385 residues: MQSRFTFLATRTLKSTTTKAKNRTFSSSTVESSTKQPPQFSQTLAGLRARLAVESPTLSDFIHLQSNNTYSVEVGTKKKPLPKPKWMREAIPGGEKYVQIKKKLRELKLHTVCEEAKCPNLGECWSGGETGTATATIMILGDTCTRGCRFCNVKTSRTPPPPDPNEPTNVAEAIASWGLDYVVITSVDRDDLADQGSGHFAETVHKLKTLKPNMLIEALVPDFRGDRGCVEKVAKSGLDVFAHNIETVEELQSSVRDHRANFKQSLDVLMMAKEYAPPGTLTKTSIMLGCGEAPEQVVKTMEKVRAAGVDVMTFGQYMRPSKRHMPVSEYITPDAFEKYKTLGMEMGFRYVASGPMVRSSYKAGEFYIKSMIESDRSVSSQLPIS.

The interval 18 to 40 (TKAKNRTFSSSTVESSTKQPPQF) is disordered. [4Fe-4S] cluster contacts are provided by Cys-113, Cys-118, Cys-124, Cys-144, Cys-148, Cys-151, and Ser-360. One can recognise a Radical SAM core domain in the interval 129–349 (ETGTATATIM…KTLGMEMGFR (221 aa)).

This sequence belongs to the radical SAM superfamily. Lipoyl synthase family. [4Fe-4S] cluster serves as cofactor.

It localises to the mitochondrion. It catalyses the reaction [[Fe-S] cluster scaffold protein carrying a second [4Fe-4S](2+) cluster] + N(6)-octanoyl-L-lysyl-[protein] + 2 oxidized [2Fe-2S]-[ferredoxin] + 2 S-adenosyl-L-methionine + 4 H(+) = [[Fe-S] cluster scaffold protein] + N(6)-[(R)-dihydrolipoyl]-L-lysyl-[protein] + 4 Fe(3+) + 2 hydrogen sulfide + 2 5'-deoxyadenosine + 2 L-methionine + 2 reduced [2Fe-2S]-[ferredoxin]. It participates in protein modification; protein lipoylation via endogenous pathway; protein N(6)-(lipoyl)lysine from octanoyl-[acyl-carrier-protein]: step 2/2. In terms of biological role, catalyzes the radical-mediated insertion of two sulfur atoms into the C-6 and C-8 positions of the octanoyl moiety bound to the lipoyl domains of lipoate-dependent enzymes, thereby converting the octanoylated domains into lipoylated derivatives. In Populus trichocarpa (Western balsam poplar), this protein is Lipoyl synthase, mitochondrial.